The chain runs to 396 residues: Elongation factor Tu (396 aa).

Residues 10-206 (KPHCNIGTIG…AVDAYIPQPE (197 aa)) form the tr-type G domain. The segment at 19 to 26 (GHVDHGKT) is G1. GTP is bound at residue 19 to 26 (GHVDHGKT). Thr-26 is a binding site for Mg(2+). The interval 60 to 64 (GITIS) is G2. A G3 region spans residues 81-84 (DCPG). GTP is bound by residues 81–85 (DCPGH) and 136–139 (NKVD). The G4 stretch occupies residues 136–139 (NKVD). Residues 174–176 (SAL) are G5.

Belongs to the TRAFAC class translation factor GTPase superfamily. Classic translation factor GTPase family. EF-Tu/EF-1A subfamily. In terms of assembly, monomer.

It localises to the cytoplasm. It carries out the reaction GTP + H2O = GDP + phosphate + H(+). In terms of biological role, GTP hydrolase that promotes the GTP-dependent binding of aminoacyl-tRNA to the A-site of ribosomes during protein biosynthesis. The chain is Elongation factor Tu from Granulibacter bethesdensis (strain ATCC BAA-1260 / CGDNIH1).